The following is a 520-amino-acid chain: Anthranilate synthase component 1 (520 aa).

L-tryptophan contacts are provided by residues S40, K50, and 291–293; that span reads PYM. 328-329 provides a ligand contact to chorismate; the sequence is GT. Residue E361 coordinates Mg(2+). Residues Y449, R469, 483–485, and G485 each bind chorismate; that span reads GAG. E498 is a Mg(2+) binding site.

It belongs to the anthranilate synthase component I family. As to quaternary structure, homodimer. In fact, exists in a monomer-dimer equilibrium in solution, shifted spontaneously in favor of the dimer; the monomer has a reduced activity compared with the dimer. Heterotetramer consisting of two non-identical subunits: a beta subunit (TrpG) and a large alpha subunit (TrpE) (Potential). Requires Mg(2+) as cofactor.

The catalysed reaction is chorismate + L-glutamine = anthranilate + pyruvate + L-glutamate + H(+). The protein operates within amino-acid biosynthesis; L-tryptophan biosynthesis; L-tryptophan from chorismate: step 1/5. With respect to regulation, cooperatively feedback inhibited by tryptophan. Its function is as follows. Part of a heterotetrameric complex that catalyzes the two-step biosynthesis of anthranilate, an intermediate in the biosynthesis of L-tryptophan. In the first step, the glutamine-binding beta subunit (TrpG) of anthranilate synthase (AS) provides the glutamine amidotransferase activity which generates ammonia as a substrate that, along with chorismate, is used in the second step, catalyzed by the large alpha subunit of AS (TrpE) to produce anthranilate. In the absence of TrpG, TrpE can synthesize anthranilate directly from chorismate and high concentrations of ammonia. In Salmonella typhimurium (strain LT2 / SGSC1412 / ATCC 700720), this protein is Anthranilate synthase component 1 (trpE).